The chain runs to 148 residues: Basic leucine zipper 4 (148 aa).

Residues 48–97 (DDKKRRRTISNRESAKRSRMKKKKRFEELTEEVNRLNIRNQELKNRLANV) enclose the bZIP domain. The tract at residues 50-70 (KKRRRTISNRESAKRSRMKKK) is disordered. The basic motif stretch occupies residues 50–72 (KKRRRTISNRESAKRSRMKKKKR). Positions 76–90 (LTEEVNRLNIRNQEL) are leucine-zipper.

The protein localises to the nucleus. Probable transcription factor involved in somatic embryogenesis. Acts as a positive regulator of BHLH109. In Arabidopsis thaliana (Mouse-ear cress), this protein is Basic leucine zipper 4.